A 274-amino-acid polypeptide reads, in one-letter code: 4-diphosphocytidyl-2-C-methyl-D-erythritol kinase (274 aa).

Residue K8 is part of the active site. Position 92-102 (92-102 (PSGAGLGGGSS)) interacts with ATP. Residue D134 is part of the active site.

The protein belongs to the GHMP kinase family. IspE subfamily.

The catalysed reaction is 4-CDP-2-C-methyl-D-erythritol + ATP = 4-CDP-2-C-methyl-D-erythritol 2-phosphate + ADP + H(+). The protein operates within isoprenoid biosynthesis; isopentenyl diphosphate biosynthesis via DXP pathway; isopentenyl diphosphate from 1-deoxy-D-xylulose 5-phosphate: step 3/6. Its function is as follows. Catalyzes the phosphorylation of the position 2 hydroxy group of 4-diphosphocytidyl-2C-methyl-D-erythritol. The polypeptide is 4-diphosphocytidyl-2-C-methyl-D-erythritol kinase (Porphyromonas gingivalis (strain ATCC 33277 / DSM 20709 / CIP 103683 / JCM 12257 / NCTC 11834 / 2561)).